The sequence spans 150 residues: Lipoprotein signal peptidase (150 aa).

A run of 3 helical transmembrane segments spans residues 8–28 (FYAL…LAHA), 58–78 (GFSW…GWFL), and 81–101 (TTGS…NVFD). Active-site residues include Asp-116 and Asp-132. A helical membrane pass occupies residues 126 to 146 (VVFNIADLFILAGVFGTFLFL).

The protein belongs to the peptidase A8 family.

The protein localises to the cell membrane. The enzyme catalyses Release of signal peptides from bacterial membrane prolipoproteins. Hydrolyzes -Xaa-Yaa-Zaa-|-(S,diacylglyceryl)Cys-, in which Xaa is hydrophobic (preferably Leu), and Yaa (Ala or Ser) and Zaa (Gly or Ala) have small, neutral side chains.. It functions in the pathway protein modification; lipoprotein biosynthesis (signal peptide cleavage). Functionally, this protein specifically catalyzes the removal of signal peptides from prolipoproteins. This chain is Lipoprotein signal peptidase, found in Tropheryma whipplei (strain Twist) (Whipple's bacillus).